Consider the following 589-residue polypeptide: Ectoderm-neural cortex protein 1 (589 aa).

Positions 46 to 114 (TDVLLHAGNR…AYSSRVIINE (69 aa)) constitute a BTB domain. Kelch repeat units lie at residues 296–340 (ALFL…AIGC), 341–388 (KVYI…ELKH), 389–444 (CLYV…SAKL), 446–492 (LFAF…VLGN), 494–538 (IFIM…ASGN), and 539–585 (KLYV…STWK).

Binds to RB1. Hypophosphorylated RB1 associates with ENC1 during neuronal differentiation, while hyperphosphorylated RB1 associates with ENC1 in undifferentiating cells. Part of a complex that contains CUL3, RBX1 and ENC1. Interacts indirectly with KEAP1. Ubiquitinated by E3 ubiquitin ligase complex formed by CUL3 and RBX1 and probably targeted for proteasome-independent degradation. Quinone-induced oxidative stress increases its ubiquitination. In terms of tissue distribution, primarily expressed in the nervous system.

It is found in the nucleus matrix. Its subcellular location is the cytoplasm. The protein resides in the cytoskeleton. Its function is as follows. Actin-binding protein involved in the regulation of neuronal process formation and in differentiation of neural crest cells. Down-regulates transcription factor NF2L2/NRF2 by decreasing the rate of protein synthesis and not via a ubiquitin-mediated proteasomal degradation mechanism. In Mus musculus (Mouse), this protein is Ectoderm-neural cortex protein 1 (Enc1).